Reading from the N-terminus, the 292-residue chain is Trimeric intracellular cation channel type B (292 aa).

Residues M1–S16 are Lumenal-facing. A helical membrane pass occupies residues M17–K34. At Q35–P47 the chain is on the cytoplasmic side. Residues L48 to L69 traverse the membrane as a helical segment. Residues A70–N82 are Lumenal-facing. A helical membrane pass occupies residues I83 to L100. Topologically, residues V101 to Q103 are cytoplasmic. A helical membrane pass occupies residues G104–R122. Residues K118 and R122 each contribute to the a 1,2-diacyl-sn-glycero-3-phospho-(1D-myo-inositol-4,5-bisphosphate) site. The Lumenal segment spans residues T123–A140. A helical membrane pass occupies residues W141 to V158. Over T159–K178 the chain is Cytoplasmic. Residues M179–F195 form a helical membrane-spanning segment. The Lumenal segment spans residues Q196 to H206. Residues D207–M225 traverse the membrane as a helical segment. Residues T226–D292 lie on the Cytoplasmic side of the membrane. A disordered region spans residues R248 to D292. The segment covering S265–S274 has biased composition (low complexity).

This sequence belongs to the TMEM38 family. In terms of assembly, homotrimer; conformation seems to be controled by binding to diacylglycerol (DAG). In terms of tissue distribution, widely expressed.

It localises to the endoplasmic reticulum membrane. The catalysed reaction is K(+)(in) = K(+)(out). Channel activity is activated by increased cytosolic Ca(2+) levels and blocked by luminal high Ca(2+) levels. Intracellular monovalent cation channel required for maintenance of rapid intracellular calcium release. Acts as a potassium counter-ion channel that functions in synchronization with calcium release from intracellular stores. Activated by increased cytosolic Ca(2+) levels. This chain is Trimeric intracellular cation channel type B (Tmem38b), found in Mus musculus (Mouse).